The sequence spans 720 residues: 1,4-alpha-glucan branching enzyme GlgB 2 (720 aa).

The active-site Nucleophile is aspartate 398. Glutamate 451 (proton donor) is an active-site residue.

The protein belongs to the glycosyl hydrolase 13 family. GlgB subfamily. As to quaternary structure, monomer.

The catalysed reaction is Transfers a segment of a (1-&gt;4)-alpha-D-glucan chain to a primary hydroxy group in a similar glucan chain.. It functions in the pathway glycan biosynthesis; glycogen biosynthesis. Catalyzes the formation of the alpha-1,6-glucosidic linkages in glycogen by scission of a 1,4-alpha-linked oligosaccharide from growing alpha-1,4-glucan chains and the subsequent attachment of the oligosaccharide to the alpha-1,6 position. The chain is 1,4-alpha-glucan branching enzyme GlgB 2 from Xanthomonas oryzae pv. oryzae (strain KACC10331 / KXO85).